Consider the following 394-residue polypeptide: L-lactate dehydrogenase (394 aa).

Residues 1 to 380 (MIISAASDYR…SRDSLVQNAE (380 aa)) enclose the FMN hydroxy acid dehydrogenase domain. A substrate-binding site is contributed by Tyr-24. FMN contacts are provided by Ser-106 and Gln-127. Tyr-129 contributes to the substrate binding site. FMN is bound at residue Thr-155. Substrate is bound at residue Arg-164. Position 251 (Lys-251) interacts with FMN. The active-site Proton acceptor is His-275. Arg-278 contacts substrate. 306–330 (DSGIRNGLDVVRMIALGADSVLLGR) is a binding site for FMN.

This sequence belongs to the FMN-dependent alpha-hydroxy acid dehydrogenase family. FMN is required as a cofactor.

Its subcellular location is the cell inner membrane. The catalysed reaction is (S)-lactate + A = pyruvate + AH2. Functionally, catalyzes the conversion of L-lactate to pyruvate. Is coupled to the respiratory chain. In Klebsiella pneumoniae (strain 342), this protein is L-lactate dehydrogenase.